The following is a 45-amino-acid chain: Somatoliberin (45 aa).

This sequence belongs to the glucagon family.

Its subcellular location is the secreted. Functionally, GRF is released by the hypothalamus and acts on the adenohypophyse to stimulate the secretion of growth hormone. In Cyprinus carpio (Common carp), this protein is Somatoliberin (ghrh).